A 338-amino-acid chain; its full sequence is UPF0324 membrane protein NMA0465 (338 aa).

10 helical membrane-spanning segments follow: residues 5–23, 33–55, 62–84, 94–116, 123–145, 155–177, 222–239, 254–273, 280–302, and 312–334; these read PFYF…ANYL, HISA…YPQF, GVLF…RLTF, AVVT…GIRY, LVYL…AESV, VAIA…FYTW, IRVM…WLLT, IPWF…FDLL, LFVE…TTHA, and PFVL…NYGI.

Belongs to the UPF0324 family.

The protein localises to the cell membrane. In Neisseria meningitidis serogroup A / serotype 4A (strain DSM 15465 / Z2491), this protein is UPF0324 membrane protein NMA0465.